A 388-amino-acid chain; its full sequence is Succinate--CoA ligase [ADP-forming] subunit beta (388 aa).

In terms of domain architecture, ATP-grasp spans 9–245 (KELLASYGLP…KSQENERELK (237 aa)). ATP is bound by residues Lys46, 53-55 (GRG), Glu100, Tyr103, and Glu108. Mg(2+) contacts are provided by Asn200 and Asp214. Substrate contacts are provided by residues Asn265 and 322–324 (GIV).

The protein belongs to the succinate/malate CoA ligase beta subunit family. As to quaternary structure, heterotetramer of two alpha and two beta subunits. It depends on Mg(2+) as a cofactor.

The catalysed reaction is succinate + ATP + CoA = succinyl-CoA + ADP + phosphate. The enzyme catalyses GTP + succinate + CoA = succinyl-CoA + GDP + phosphate. The protein operates within carbohydrate metabolism; tricarboxylic acid cycle; succinate from succinyl-CoA (ligase route): step 1/1. Functionally, succinyl-CoA synthetase functions in the citric acid cycle (TCA), coupling the hydrolysis of succinyl-CoA to the synthesis of either ATP or GTP and thus represents the only step of substrate-level phosphorylation in the TCA. The beta subunit provides nucleotide specificity of the enzyme and binds the substrate succinate, while the binding sites for coenzyme A and phosphate are found in the alpha subunit. This chain is Succinate--CoA ligase [ADP-forming] subunit beta, found in Neisseria gonorrhoeae (strain ATCC 700825 / FA 1090).